We begin with the raw amino-acid sequence, 476 residues long: Rifampicin monooxygenase (476 aa).

Residues T12, E31, K32, Q98, L122, and T156 each contribute to the FAD site. Rifampicin is bound by residues R196 and R213. Positions 277, 290, and 291 each coordinate FAD.

This sequence belongs to the rifampicin monooxygenase family. It depends on FAD as a cofactor.

The catalysed reaction is rifampicin + NADPH + O2 = rifampicin para-naphthoquinone carboxamide + NADP(+) + H2O + H(+). It carries out the reaction rifampicin + NADH + O2 = rifampicin para-naphthoquinone carboxamide + NAD(+) + H2O + H(+). It catalyses the reaction rifamycin SV + NADPH + O2 = rifamycin SV para-naphthoquinone carboxamide + NADP(+) + H2O. The enzyme catalyses rifamycin SV + NADH + O2 = rifamycin SV para-naphthoquinone carboxamide + NAD(+) + H2O. Its function is as follows. Monooxygenase that can modify rifampicin, thereby inactivating its antibiotic activity. Inactivates a broad range of rifamycin antibiotics. The polypeptide is Rifampicin monooxygenase (Streptomyces venezuelae (strain ATCC 10712 / CBS 650.69 / DSM 40230 / JCM 4526 / NBRC 13096 / PD 04745)).